The following is a 112-amino-acid chain: UPF0060 membrane protein Mpe_A1656 (112 aa).

The next 4 membrane-spanning stretches (helical) occupy residues 9–29 (GLFFVTAVAEIVGCYLPWLVL), 34–54 (SAWLLVPAAASLAVFAWLLTL), 65–85 (AYGGVYVVVALLWLWRVDGVV), and 91–111 (LVGGAICLAGMAIIALQPRAA).

This sequence belongs to the UPF0060 family.

It is found in the cell inner membrane. This Methylibium petroleiphilum (strain ATCC BAA-1232 / LMG 22953 / PM1) protein is UPF0060 membrane protein Mpe_A1656.